Reading from the N-terminus, the 715-residue chain is Interferon-induced GTP-binding protein Mx2 (715 aa).

A Dynamin-type G domain is found at 115-387; sequence DLALPAIAVI…LIMHIQKSLP (273 aa). The G1 motif stretch occupies residues 125-132; the sequence is GDQSSGKS. 125–132 provides a ligand contact to GTP; that stretch reads GDQSSGKS. The segment at 150 to 152 is G2 motif; it reads VTR. Residues 225–228 form a G3 motif region; the sequence is DLPG. GTP-binding positions include 225 to 229 and 294 to 297; these read DLPGI and TKPD. The tract at residues 294–297 is G4 motif; sequence TKPD. The segment at 326 to 329 is G5 motif; that stretch reads KCRG. The GED domain maps to 623–714; that stretch reads FTEIGIHLNA…ALCQFSSKEI (92 aa).

This sequence belongs to the TRAFAC class dynamin-like GTPase superfamily. Dynamin/Fzo/YdjA family.

The protein localises to the cytoplasm. Its subcellular location is the nucleus. It is found in the nuclear pore complex. In terms of biological role, interferon-induced dynamin-like GTPase with potent antiviral activity against human immunodeficiency virus type 1 (HIV-1). Acts by targeting the viral capsid and affects the nuclear uptake and/or stability of the HIV-1 replication complex and the subsequent chromosomal integration of the proviral DNA. Exhibits antiviral activity also against simian immunodeficiency virus (SIV-mnd). May play a role in regulating nucleocytoplasmic transport and cell-cycle progression. The polypeptide is Interferon-induced GTP-binding protein Mx2 (MX2) (Homo sapiens (Human)).